We begin with the raw amino-acid sequence, 148 residues long: UPF0756 membrane protein KPK_3307 (148 aa).

A run of 4 helical transmembrane segments spans residues 14–34 (ALGF…LIIV), 51–71 (LTVG…SGTL), 86–106 (LLAI…VSLM), and 121–141 (VLGV…AGII).

The protein belongs to the UPF0756 family.

It is found in the cell membrane. This chain is UPF0756 membrane protein KPK_3307, found in Klebsiella pneumoniae (strain 342).